Reading from the N-terminus, the 453-residue chain is DDB1- and CUL4-associated factor 12 (453 aa).

Over residues 1 to 12 the composition is skewed to basic residues; the sequence is MARKAVSRKRKA. The disordered stretch occupies residues 1 to 34; that stretch reads MARKAVSRKRKASASPGAGSDAQGPQFGWDHSLH. The required for nuclear location and interaction with MOV10 stretch occupies residues 1-38; sequence MARKAVSRKRKASASPGAGSDAQGPQFGWDHSLHKRKR. The residue at position 15 (Ser15) is a Phosphoserine. 4 WD repeats span residues 138 to 178, 182 to 220, 250 to 289, and 338 to 375; these read QQGC…PVCV, GHKD…LTKS, PDNC…SKLL, and ERGS…FLEE.

This sequence belongs to the WD repeat DCAF12 family. Component of the DCX(DCAF12) E3 ubiquitin ligase complex, at least composed of CUL4 (CUL4A or CUL4B), DDB1, DCAF12 and RBX1.

The protein resides in the cytoplasm. Its subcellular location is the cytoskeleton. The protein localises to the microtubule organizing center. It is found in the centrosome. It localises to the nucleus. It functions in the pathway protein modification; protein ubiquitination. In terms of biological role, substrate-recognition component of a DCX (DDB1-CUL4-X-box) E3 ubiquitin-protein ligase complex of the DesCEND (destruction via C-end degrons) pathway, which recognizes a C-degron located at the extreme C terminus of target proteins, leading to their ubiquitination and degradation. The C-degron recognized by the DesCEND pathway is usually a motif of less than ten residues and can be present in full-length proteins, truncated proteins or proteolytically cleaved forms. The DCX(DCAF12) complex specifically recognizes proteins with a diglutamate (Glu-Glu) at the C-terminus, such as MAGEA3, MAGEA6 and CCT5, leading to their ubiquitination and degradation. Ubiquitination of MAGEA3, MAGEA6 by DCX(DCAF12) complex is required for starvation-induced autophagy. Also directly recognizes the C-terminal glutamate-leucine (Glu-Leu) degron as an alternative degron in proteins such as MOV10, leading to their ubiquitination and degradation. Controls the protein level of MOV10 during spermatogenesis and in T cells, especially after their activation. The sequence is that of DDB1- and CUL4-associated factor 12 from Mus musculus (Mouse).